Consider the following 257-residue polypeptide: Ribosomal RNA small subunit methyltransferase A (257 aa).

Positions 12, 14, 39, 60, 83, and 101 each coordinate S-adenosyl-L-methionine.

The protein belongs to the class I-like SAM-binding methyltransferase superfamily. rRNA adenine N(6)-methyltransferase family. RsmA subfamily.

The protein resides in the cytoplasm. The enzyme catalyses adenosine(1518)/adenosine(1519) in 16S rRNA + 4 S-adenosyl-L-methionine = N(6)-dimethyladenosine(1518)/N(6)-dimethyladenosine(1519) in 16S rRNA + 4 S-adenosyl-L-homocysteine + 4 H(+). In terms of biological role, specifically dimethylates two adjacent adenosines (A1518 and A1519) in the loop of a conserved hairpin near the 3'-end of 16S rRNA in the 30S particle. May play a critical role in biogenesis of 30S subunits. This Nitrosomonas europaea (strain ATCC 19718 / CIP 103999 / KCTC 2705 / NBRC 14298) protein is Ribosomal RNA small subunit methyltransferase A.